A 198-amino-acid polypeptide reads, in one-letter code: Transcription antitermination protein NusB (198 aa).

The protein belongs to the NusB family.

Functionally, involved in transcription antitermination. Required for transcription of ribosomal RNA (rRNA) genes. Binds specifically to the boxA antiterminator sequence of the ribosomal RNA (rrn) operons. The polypeptide is Transcription antitermination protein NusB (Methylococcus capsulatus (strain ATCC 33009 / NCIMB 11132 / Bath)).